A 220-amino-acid polypeptide reads, in one-letter code: CRIB domain-containing protein RIC3 (220 aa).

One can recognise a CRIB domain in the interval 28-41; it reads IGFPTDVKHVAHIG. A disordered region spans residues 39-220; it reads HIGSDGPATN…CNDNNISDKE (182 aa). Polar residues predominate over residues 61-77; the sequence is NENGQVVSRADANNNQI. Positions 108–121 are enriched in low complexity; sequence NGSPPRRNSSASAS. Basic residues-rich tracts occupy residues 127–136 and 172–184; these read NTRRHHRSRH and HSRKSTSRHRKPK. Over residues 209–220 the composition is skewed to polar residues; sequence DTCNDNNISDKE.

In terms of assembly, interacts with ARAC11/ROP1. As to expression, expressed in flowers and pollen.

The protein localises to the cytoplasm. Its function is as follows. Functions as a downstream effector of Rho-related GTP binding proteins of the 'Rho of Plants' (ROPs) family. Participates in the propagation of ROP GTPase signals in specific cellular responses. Functions as a downstream effector of ARAC11/ROP1 to activate calcium signaling that leads to F-actin disassembly associated with exocytosis in the tip of the growing pollen tube. Counteracts the ARAC11/ROP1-RIC4 pathway, which promotes apical F-actin assembly associated with vesicle accumulation, to control actin dynamics and pollen tube apical growth. The polypeptide is CRIB domain-containing protein RIC3 (RIC3) (Arabidopsis thaliana (Mouse-ear cress)).